Consider the following 865-residue polypeptide: Anaphase-promoting complex subunit 2 (865 aa).

It belongs to the cullin family. The APC/C is composed of at least 10 subunits. Interacts with APC8, APC11, CDC27A and CDC27B. Highly expressed in immature flowers. Expressed in stems, leaves and flowers.

It is found in the nucleus. It participates in protein modification; protein ubiquitination. In terms of biological role, component of the anaphase promoting complex/cyclosome (APC/C), a cell cycle-regulated E3 ubiquitin-protein ligase complex that controls progression through mitosis and the G1 phase of the cell cycle. The APC/C complex controls several key steps in the cell cycle by mediating ubiquitination and subsequent degradation of target proteins such as cyclins. The APC/C complex is required for the female gametophyte development and is involved in several aspect of development by controlling cell division and cell elongation. Involved in the control of endoreduplication. The sequence is that of Anaphase-promoting complex subunit 2 (APC2) from Arabidopsis thaliana (Mouse-ear cress).